A 139-amino-acid chain; its full sequence is MAVKIKLKRLGKIRSPHYRIVVADSRTRRDGRAIEEIGKYHPTYNPSVMEVDAERVAYWLGVGAQPTEPVLAILKKTGDWQKFKGEPAPAPLLQPAEKAARPSFEAIGGEDEGKGEAITQKKKADKKDEAAAESSASEA.

The tract at residues 84-139 (KGEPAPAPLLQPAEKAARPSFEAIGGEDEGKGEAITQKKKADKKDEAAAESSASEA) is disordered.

The protein belongs to the bacterial ribosomal protein bS16 family.

This is Small ribosomal subunit protein bS16 from Streptomyces coelicolor (strain ATCC BAA-471 / A3(2) / M145).